A 443-amino-acid chain; its full sequence is Na(+)-translocating ferredoxin:NAD(+) oxidoreductase complex subunit C (443 aa).

4Fe-4S ferredoxin-type domains are found at residues 359 to 391 (ESAK…IAEY) and 398 to 428 (DKCE…VSSI). Positions 369, 372, 375, 379, 408, 411, 414, and 418 each coordinate [4Fe-4S] cluster.

Belongs to the 4Fe4S bacterial-type ferredoxin family. RnfC subfamily. The complex is composed of six subunits: RnfA, RnfB, RnfC, RnfD, RnfE and RnfG. [4Fe-4S] cluster serves as cofactor.

Its subcellular location is the cell membrane. It carries out the reaction 2 reduced [2Fe-2S]-[ferredoxin] + Na(+)(in) + NAD(+) + H(+) = 2 oxidized [2Fe-2S]-[ferredoxin] + Na(+)(out) + NADH. Functionally, part of a membrane-bound complex that couples electron transfer with translocation of ions across the membrane. Couples electron transfer from reduced ferredoxin to NAD(+) with electrogenic movement of Na(+) out of the cell. Involved in caffeate respiration. This Acetobacterium woodii (strain ATCC 29683 / DSM 1030 / JCM 2381 / KCTC 1655 / WB1) protein is Na(+)-translocating ferredoxin:NAD(+) oxidoreductase complex subunit C.